A 228-amino-acid chain; its full sequence is ATP-dependent dethiobiotin synthetase BioD (228 aa).

13 to 18 (DIGKTF) serves as a coordination point for ATP. Threonine 17 is a Mg(2+) binding site. Lysine 38 is a catalytic residue. Position 42 (serine 42) interacts with substrate. ATP contacts are provided by residues aspartate 55, 116–119 (EGSG), 179–180 (NK), and 208–210 (PKI). Residues aspartate 55 and glutamate 116 each coordinate Mg(2+).

The protein belongs to the dethiobiotin synthetase family. In terms of assembly, homodimer. It depends on Mg(2+) as a cofactor.

Its subcellular location is the cytoplasm. It catalyses the reaction (7R,8S)-7,8-diammoniononanoate + CO2 + ATP = (4R,5S)-dethiobiotin + ADP + phosphate + 3 H(+). It functions in the pathway cofactor biosynthesis; biotin biosynthesis; biotin from 7,8-diaminononanoate: step 1/2. Catalyzes a mechanistically unusual reaction, the ATP-dependent insertion of CO2 between the N7 and N8 nitrogen atoms of 7,8-diaminopelargonic acid (DAPA, also called 7,8-diammoniononanoate) to form a ureido ring. The protein is ATP-dependent dethiobiotin synthetase BioD of Clostridium perfringens (strain 13 / Type A).